We begin with the raw amino-acid sequence, 142 residues long: VapC ribonuclease R02377 (142 aa).

Residues 3–140 (FVDGSVIVAI…YKGNDFSQTD (138 aa)) form the PINc domain. Mg(2+) contacts are provided by aspartate 5 and aspartate 115.

This sequence belongs to the PINc/VapC protein family. Mg(2+) serves as cofactor.

In terms of biological role, toxic component of a type II toxin-antitoxin (TA) system. An RNase. The chain is VapC ribonuclease R02377 from Rhizobium meliloti (strain 1021) (Ensifer meliloti).